The following is a 180-amino-acid chain: V-type proton ATPase subunit c''1 (180 aa).

Residues 1-26 (MSGVVALGHASSWGAALVRISPYTFS) lie on the Lumenal side of the membrane. Residues 27–47 (AIGIAISIGVSVLGAAWGIYI) form a helical membrane-spanning segment. Residues 48 to 66 (TGSSLIGAAIEAPRITSKN) lie on the Cytoplasmic side of the membrane. The helical transmembrane segment at 67-87 (LISVIFCEAVAIYGVIVAIIL) threads the bilayer. At 88–110 (QTKLESVPSSKMYDAESLRAGYA) the chain is on the lumenal side. The helical transmembrane segment at 111-131 (IFASGIIVGFANLVCGLCVGI) threads the bilayer. The Cytoplasmic portion of the chain corresponds to 132 to 149 (IGSSCALSDAQNSTLFVK). The helical transmembrane segment at 150-170 (ILVIEIFGSALGLFGVIVGII) threads the bilayer. Residues 171 to 180 (MSAQATWPTK) are Lumenal-facing.

The protein belongs to the V-ATPase proteolipid subunit family. V-ATPase is a heteromultimeric enzyme composed of a peripheral catalytic V1 complex (components A to H) attached to an integral membrane V0 proton pore complex (components: a, c, c'', d and e). The proteolipid components c and c'' are present as a hexameric ring that forms the proton-conducting pore. As to expression, preferentially expressed in roots.

The protein localises to the endoplasmic reticulum membrane. It is found in the golgi apparatus membrane. Its function is as follows. Proton-conducting pore forming subunit of the membrane integral V0 complex of vacuolar ATPase. V-ATPase is responsible for acidifying a variety of intracellular compartments in eukaryotic cells. This chain is V-type proton ATPase subunit c''1 (VHA-c''1), found in Arabidopsis thaliana (Mouse-ear cress).